Consider the following 190-residue polypeptide: Imidazoleglycerol-phosphate dehydratase (190 aa).

Belongs to the imidazoleglycerol-phosphate dehydratase family.

Its subcellular location is the cytoplasm. The catalysed reaction is D-erythro-1-(imidazol-4-yl)glycerol 3-phosphate = 3-(imidazol-4-yl)-2-oxopropyl phosphate + H2O. The protein operates within amino-acid biosynthesis; L-histidine biosynthesis; L-histidine from 5-phospho-alpha-D-ribose 1-diphosphate: step 6/9. The protein is Imidazoleglycerol-phosphate dehydratase of Methanococcus maripaludis (strain C5 / ATCC BAA-1333).